A 1461-amino-acid chain; its full sequence is A disintegrin and metalloproteinase with thrombospondin motifs adt-1 (1461 aa).

An N-terminal signal peptide occupies residues 1–21 (MPPFYIVITFLLSTVFRISQS). The propeptide occupies 22 to 163 (VHHHLNEEEL…HLQKERHLVY (142 aa)). N-linked (GlcNAc...) asparagine glycosylation is present at asparagine 69. Residues 190 to 197 (SFCDTSEQ) carry the Cysteine switch motif. Residue asparagine 212 is glycosylated (N-linked (GlcNAc...) asparagine). In terms of domain architecture, Peptidase M12B spans 233 to 435 (ITLEIGLFLD…CSVREFNAFL (203 aa)). Histidine 388 is a Zn(2+) binding site. Residue glutamate 389 is part of the active site. Zn(2+)-binding residues include histidine 392 and histidine 398. Cysteine 405 and cysteine 410 are oxidised to a cystine. The Disintegrin domain maps to 464-546 (RLPGQRFTAD…TFGLTPVPID (83 aa)). 13 TSP type-1 domains span residues 708-759 (HQWE…RDCE), 761-802 (FGEW…RPCD), 804-852 (EGCW…QKCI), 853-898 (SQSW…QQCP), 903-952 (LSVW…GPCE), 955-1000 (YLTW…IACL), 1035-1083 (SIHS…NSCL), 1087-1133 (IWSD…PSCS), 1148-1200 (APRW…GSCS), 1203-1260 (AGGW…NVCS), 1265-1321 (DGGW…ARCH), 1324-1378 (DGGW…PACD), and 1382-1435 (DGEW…RQSP). Cystine bridges form between cysteine 719–cysteine 751, cysteine 723–cysteine 758, and cysteine 735–cysteine 741. 6 disulfides stabilise this stretch: cysteine 816–cysteine 846, cysteine 820–cysteine 851, cysteine 831–cysteine 836, cysteine 862–cysteine 892, cysteine 866–cysteine 897, and cysteine 877–cysteine 882. 3 cysteine pairs are disulfide-bonded: cysteine 1047–cysteine 1077, cysteine 1051–cysteine 1082, and cysteine 1062–cysteine 1067. Disulfide bonds link cysteine 1160–cysteine 1194, cysteine 1162–cysteine 1199, cysteine 1173–cysteine 1184, cysteine 1215–cysteine 1253, cysteine 1219–cysteine 1259, cysteine 1231–cysteine 1243, cysteine 1277–cysteine 1314, cysteine 1281–cysteine 1320, cysteine 1292–cysteine 1304, cysteine 1336–cysteine 1372, cysteine 1340–cysteine 1377, and cysteine 1351–cysteine 1362.

Zn(2+) serves as cofactor. As to expression, in hermaphrodites, expressed in the vulva, head ganglia, ventral nerve cord and amphid neurons. Expressed in the rays of the male tail.

The protein resides in the secreted. Functionally, plays a role in ray morphogenesis in the male tail, probably by remodeling the extracellular matrix (ECM) in the cuticle. The chain is A disintegrin and metalloproteinase with thrombospondin motifs adt-1 from Caenorhabditis elegans.